Consider the following 396-residue polypeptide: Elongation factor Tu (396 aa).

The 197-residue stretch at 10–206 folds into the tr-type G domain; that stretch reads KPHVNIGTIG…AVDSYIPDPE (197 aa). The tract at residues 19 to 26 is G1; sequence GHVDHGKT. 19-26 is a GTP binding site; sequence GHVDHGKT. Thr-26 provides a ligand contact to Mg(2+). Positions 60–64 are G2; it reads GITIA. The segment at 81–84 is G3; sequence DCPG. Residues 81–85 and 136–139 each bind GTP; these read DCPGH and NKAD. The G4 stretch occupies residues 136–139; it reads NKAD. A G5 region spans residues 174–176; the sequence is SAL.

The protein belongs to the TRAFAC class translation factor GTPase superfamily. Classic translation factor GTPase family. EF-Tu/EF-1A subfamily. Monomer.

Its subcellular location is the cytoplasm. The catalysed reaction is GTP + H2O = GDP + phosphate + H(+). GTP hydrolase that promotes the GTP-dependent binding of aminoacyl-tRNA to the A-site of ribosomes during protein biosynthesis. The chain is Elongation factor Tu from Pelobacter propionicus (strain DSM 2379 / NBRC 103807 / OttBd1).